Reading from the N-terminus, the 246-residue chain is MKISDVRSKAFAMPLTSPAFPMGPYRFVDREFLIITYRTDPDRLREIVPEPLKVTEPLVHYEFIRMADSTGFGDYTESGQVIPVEYNGQPGGYTLAMYLDDHPPIAGGRELWGFPKKLASPTLHVNTDHILGTLDYGKVRVATGTMGYKHKELDIVEQAKRLAGPNFLLKIIPHVDGTARVCELVRYYMQDIVMKGAWTGPASLELSPHALAPVADLPVLEIVEARHLVADLTLGLGEVVYDYLAQ.

Catalysis depends on Lys-116, which acts as the Schiff-base intermediate with acetoacetate.

It belongs to the ADC family.

It carries out the reaction acetoacetate + H(+) = acetone + CO2. In terms of biological role, catalyzes the conversion of acetoacetate to acetone and carbon dioxide. This chain is Acetoacetate decarboxylase, found in Burkholderia multivorans (strain ATCC 17616 / 249).